Consider the following 254-residue polypeptide: Alcohol dehydrogenase (254 aa).

10 to 33 (FVAGLGGIGLDTSRELVKRNLKNL) provides a ligand contact to NAD(+). Position 138 (serine 138) interacts with substrate. The Proton acceptor role is filled by tyrosine 151.

Belongs to the short-chain dehydrogenases/reductases (SDR) family. As to quaternary structure, homodimer.

It carries out the reaction a primary alcohol + NAD(+) = an aldehyde + NADH + H(+). The enzyme catalyses a secondary alcohol + NAD(+) = a ketone + NADH + H(+). The polypeptide is Alcohol dehydrogenase (Adh) (Drosophila pseudoobscura pseudoobscura (Fruit fly)).